We begin with the raw amino-acid sequence, 444 residues long: MSQSYINVIGAGLAGSEAAYQIAERGIPVKLYEMRGVKSTPQHKTDNFAELVCSNSLRGDALTNAVGLLKEEMRRLGSVILESAEATRVPAGGALAVDRDGFSQMVTEKVVNHPLIEVVRDEITELPTDVITVVATGPLTSDALAEKIHALNNGDGFYFYDAAAPIIDVNTIDMSKVYLKSRYDKGEAAYLNAPMTKQEFMDFHEALVNAEEAPLNSFEKEKYFEGCMPIEVMAKRGIKTMLYGPMKPVGLEYPDDYTGPRDGEFKTPYAVVQLRQDNAAGSLYNIVGFQTHLKWGEQKRVFQMIPGLENAEFVRYGVMHRNSYMDSPNLLEQTYRSKKQPNLFFAGQMTGVEGYVESAASGLVAGINAARLFKEESEAIFPETTAIGSLAHYITHADSKHFQPMNVNFGIIKELEGERIRDKKARYEKIAERALADLEEFLTV.

10 to 15 (GAGLAG) is an FAD binding site.

This sequence belongs to the MnmG family. TrmFO subfamily. It depends on FAD as a cofactor.

The protein localises to the cytoplasm. The enzyme catalyses uridine(54) in tRNA + (6R)-5,10-methylene-5,6,7,8-tetrahydrofolate + NADH + H(+) = 5-methyluridine(54) in tRNA + (6S)-5,6,7,8-tetrahydrofolate + NAD(+). It catalyses the reaction uridine(54) in tRNA + (6R)-5,10-methylene-5,6,7,8-tetrahydrofolate + NADPH + H(+) = 5-methyluridine(54) in tRNA + (6S)-5,6,7,8-tetrahydrofolate + NADP(+). In terms of biological role, catalyzes the folate-dependent formation of 5-methyl-uridine at position 54 (M-5-U54) in all tRNAs. In Streptococcus pneumoniae (strain 70585), this protein is Methylenetetrahydrofolate--tRNA-(uracil-5-)-methyltransferase TrmFO.